We begin with the raw amino-acid sequence, 543 residues long: Ribosomal protein arginine N-methyltransferase rmt3 (543 aa).

The C2H2-type zinc finger occupies 58-81; sequence FCCLFCDSTFTCLKDLWSHCKEAH. The region spanning 217 to 543 is the SAM-dependent MTase PRMT-type domain; sequence DSYYFESYAG…KADSQSYVLN (327 aa). S-adenosyl-L-homocysteine is bound by residues arginine 239, glycine 263, aspartate 285, serine 287, isoleucine 313, and glutamate 314. Catalysis depends on residues glutamate 329 and glutamate 338.

It belongs to the class I-like SAM-binding methyltransferase superfamily. Protein arginine N-methyltransferase family. Interacts with ef1a-c, rps2 and rps24. Note=Associates with the 40S ribosomal particle.

It localises to the cytoplasm. It is found in the cytosol. It catalyses the reaction L-arginyl-[protein] + S-adenosyl-L-methionine = N(omega)-methyl-L-arginyl-[protein] + S-adenosyl-L-homocysteine + H(+). The catalysed reaction is L-arginyl-[protein] + 2 S-adenosyl-L-methionine = N(omega),N(omega)-dimethyl-L-arginyl-[protein] + 2 S-adenosyl-L-homocysteine + 2 H(+). In terms of biological role, methylates (mono and asymmetric dimethylation) the guanidino nitrogens of arginyl residues in ribosomal protein rps2. The chain is Ribosomal protein arginine N-methyltransferase rmt3 (rmt3) from Schizosaccharomyces pombe (strain 972 / ATCC 24843) (Fission yeast).